Reading from the N-terminus, the 354-residue chain is Alanine racemase (354 aa).

K33 acts as the Proton acceptor; specific for D-alanine in catalysis. K33 carries the N6-(pyridoxal phosphate)lysine modification. Residue R127 coordinates substrate. Residue Y251 is the Proton acceptor; specific for L-alanine of the active site. M299 lines the substrate pocket.

It belongs to the alanine racemase family. Pyridoxal 5'-phosphate serves as cofactor.

It catalyses the reaction L-alanine = D-alanine. Its pathway is amino-acid biosynthesis; D-alanine biosynthesis; D-alanine from L-alanine: step 1/1. Its function is as follows. Catalyzes the interconversion of L-alanine and D-alanine. May also act on other amino acids. This Fusobacterium nucleatum subsp. nucleatum (strain ATCC 25586 / DSM 15643 / BCRC 10681 / CIP 101130 / JCM 8532 / KCTC 2640 / LMG 13131 / VPI 4355) protein is Alanine racemase (alr).